A 640-amino-acid chain; its full sequence is Autophagy-related protein 20 (640 aa).

Composition is skewed to polar residues over residues 1 to 18 (MSDLNDVQENAKLNSETR) and 126 to 153 (AETCRTSLSGSINSMNGETSASEEPSVS). Disordered regions lie at residues 1 to 63 (MSDL…NNKV) and 126 to 156 (AETCRTSLSGSINSMNGETSASEEPSVSNRK). Serine 2 is modified (N-acetylserine). Residues 140 to 301 (MNGETSASEE…DFLDPNNHNW (162 aa)) form the PX domain. The a 1,2-diacyl-sn-glycero-3-phospho-(1D-myo-inositol-3-phosphate) site is built by arginine 192, serine 194, lysine 218, and arginine 267. Phosphoserine is present on residues serine 361 and serine 363. Coiled coils occupy residues 475–512 (LQNEMIKKSLNSKRAQLEKLEAQNNEYKDVDKIIDNEM) and 562–593 (TASINLKKEIEQLSESLEVTENDLEVISKVIK).

It belongs to the sorting nexin family. Forms a complex with SNX4 and ATG17.

The protein localises to the endosome membrane. Its subcellular location is the preautophagosomal structure membrane. Functionally, required for cytoplasm to vacuole transport (Cvt), pexophagy and mitophagy. Also involved in endoplasmic reticulum-specific autophagic process and is essential for the survival of cells subjected to severe ER stress. Functions in protein retrieval from the endocytic pathway. Required for proper sorting of the v-SNARE protein SNC1. This is Autophagy-related protein 20 (ATG20) from Saccharomyces cerevisiae (strain ATCC 204508 / S288c) (Baker's yeast).